The chain runs to 591 residues: Aspartate--tRNA(Asp/Asn) ligase (591 aa).

Residue Glu176 coordinates L-aspartate. The interval 200–203 (QLFK) is aspartate. An L-aspartate-binding site is contributed by Arg222. ATP-binding positions include 222-224 (RDE) and Gln231. His450 contacts L-aspartate. Position 484 (Glu484) interacts with ATP. Arg491 lines the L-aspartate pocket. 536–539 (GLDR) provides a ligand contact to ATP.

The protein belongs to the class-II aminoacyl-tRNA synthetase family. Type 1 subfamily. Homodimer.

It localises to the cytoplasm. The catalysed reaction is tRNA(Asx) + L-aspartate + ATP = L-aspartyl-tRNA(Asx) + AMP + diphosphate. Its function is as follows. Aspartyl-tRNA synthetase with relaxed tRNA specificity since it is able to aspartylate not only its cognate tRNA(Asp) but also tRNA(Asn). Reaction proceeds in two steps: L-aspartate is first activated by ATP to form Asp-AMP and then transferred to the acceptor end of tRNA(Asp/Asn). The chain is Aspartate--tRNA(Asp/Asn) ligase from Bacillus cereus (strain G9842).